A 438-amino-acid polypeptide reads, in one-letter code: Delta(14)-sterol reductase ERG24 (438 aa).

At 1 to 13 (MVSALNPRTTEFE) the chain is on the lumenal side. The chain crosses the membrane as a helical span at residues 14–34 (FGGLIGALGISIGLPVFTIIL). The Cytoplasmic segment spans residues 35–71 (NQMIRPDYFIKGFFQNFDIVELWNGIKPLRYYLGNRE). The chain crosses the membrane as a helical span at residues 72–90 (LWTVYCLWYGILAVLDVIL). Residues 91 to 109 (PGRVMKGVQLRDGSKLSYK) are Lumenal-facing. Residues 110-127 (INGIAMSTTLVLVLAIRW) form a helical membrane-spanning segment. Residues 128–147 (KLTDGQLPELQYLYENHVSL) lie on the Cytoplasmic side of the membrane. The chain crosses the membrane as a helical span at residues 148-172 (CIISILFSFFLATYCYVASFIPLIF). The Lumenal segment spans residues 173–242 (KKNGNGKREK…LHHHYLKTGK (70 aa)). Residues 243–263 (INDALVLVNFLQGFYIFDGVL) form a helical membrane-spanning segment. Residues 264 to 308 (NEEGVLTMMDITTDGFGFMLAFGDLSLVPFTYSLQARYLSVSPVE) lie on the Cytoplasmic side of the membrane. The helical transmembrane segment at 309 to 328 (LGWVKVVGILAIMFLGFHIF) threads the bilayer. The Lumenal segment spans residues 329–368 (HSANKQKSEFRQGKLENLKSIQTKRGTKLLCDGWWAKSQH). Residues Lys335, Arg339, Leu358, Trp363, 370–371 (NY), Asp410, 414–418 (CRLKY), and Tyr425 contribute to the NADP(+) site. The chain crosses the membrane as a helical span at residues 369 to 387 (INYFGDWLISLSWCLATWF). Over 388–438 (QTPLTYYYSLYFATLLLHRQQRDEHKCRLKYGENWEEYERKVPYKIIPYVY) the chain is Cytoplasmic.

Belongs to the ERG4/ERG24 family.

It localises to the membrane. It carries out the reaction 4,4-dimethyl-5alpha-cholesta-8,24-dien-3beta-ol + NADP(+) = 4,4-dimethyl-5alpha-cholesta-8,14,24-trien-3beta-ol + NADPH + H(+). It functions in the pathway steroid biosynthesis; zymosterol biosynthesis; zymosterol from lanosterol: step 2/6. With respect to regulation, inhibited by the morpholine antifungal drug fenpropimorph. In terms of biological role, delta(14)-sterol reductase; part of the third module of ergosterol biosynthesis pathway that includes the late steps of the pathway. ERG24 reduces the C14=C15 double bond of 4,4-dimethyl-cholesta-8,14,24-trienol to produce 4,4-dimethyl-cholesta-8,24-dienol. The third module or late pathway involves the ergosterol synthesis itself through consecutive reactions that mainly occur in the endoplasmic reticulum (ER) membrane. Firstly, the squalene synthase ERG9 catalyzes the condensation of 2 farnesyl pyrophosphate moieties to form squalene, which is the precursor of all steroids. Squalene synthase is crucial for balancing the incorporation of farnesyl diphosphate (FPP) into sterol and nonsterol isoprene synthesis. Secondly, the squalene epoxidase ERG1 catalyzes the stereospecific oxidation of squalene to (S)-2,3-epoxysqualene, which is considered to be a rate-limiting enzyme in steroid biosynthesis. Then, the lanosterol synthase ERG7 catalyzes the cyclization of (S)-2,3 oxidosqualene to lanosterol, a reaction that forms the sterol core. In the next steps, lanosterol is transformed to zymosterol through a complex process involving various demethylation, reduction and desaturation reactions. The lanosterol 14-alpha-demethylase ERG11 (also known as CYP51) catalyzes C14-demethylation of lanosterol to produce 4,4'-dimethyl cholesta-8,14,24-triene-3-beta-ol, which is critical for ergosterol biosynthesis. The C-14 reductase ERG24 reduces the C14=C15 double bond of 4,4-dimethyl-cholesta-8,14,24-trienol to produce 4,4-dimethyl-cholesta-8,24-dienol. 4,4-dimethyl-cholesta-8,24-dienol is substrate of the C-4 demethylation complex ERG25-ERG26-ERG27 in which ERG25 catalyzes the three-step monooxygenation required for the demethylation of 4,4-dimethyl and 4alpha-methylsterols, ERG26 catalyzes the oxidative decarboxylation that results in a reduction of the 3-beta-hydroxy group at the C-3 carbon to an oxo group, and ERG27 is responsible for the reduction of the keto group on the C-3. ERG28 has a role as a scaffold to help anchor ERG25, ERG26 and ERG27 to the endoplasmic reticulum and ERG29 regulates the activity of the iron-containing C4-methylsterol oxidase ERG25. Then, the sterol 24-C-methyltransferase ERG6 catalyzes the methyl transfer from S-adenosyl-methionine to the C-24 of zymosterol to form fecosterol. The C-8 sterol isomerase ERG2 catalyzes the reaction which results in unsaturation at C-7 in the B ring of sterols and thus converts fecosterol to episterol. The sterol-C5-desaturase ERG3 then catalyzes the introduction of a C-5 double bond in the B ring to produce 5-dehydroepisterol. The C-22 sterol desaturase ERG5 further converts 5-dehydroepisterol into ergosta-5,7,22,24(28)-tetraen-3beta-ol by forming the C-22(23) double bond in the sterol side chain. Finally, ergosta-5,7,22,24(28)-tetraen-3beta-ol is substrate of the C-24(28) sterol reductase ERG4 to produce ergosterol. The chain is Delta(14)-sterol reductase ERG24 from Saccharomyces cerevisiae (strain ATCC 204508 / S288c) (Baker's yeast).